The sequence spans 400 residues: Cell division protein FtsZ 2 (400 aa).

A compositionally biased stretch (basic and acidic residues) spans 1–16 (MQDIVREAMERDEAER). A disordered region spans residues 1 to 30 (MQDIVREAMERDEAERQTQSSLEDSDDQFG). GTP is bound by residues 41–45 (GAGNN), 128–130 (GTG), glutamate 159, arginine 162, and aspartate 205. A disordered region spans residues 338-400 (VLGPSTQKQA…EKNNGLDVIR (63 aa)). Residues 352-364 (QSIQSRESQQQHS) are compositionally biased toward low complexity. Positions 365-382 (GSEFDSSERAQTAQSGTW) are enriched in polar residues. The segment covering 385 to 400 (GGRDEVEKNNGLDVIR) has biased composition (basic and acidic residues).

Belongs to the FtsZ family. In terms of assembly, homodimer. Polymerizes to form a dynamic ring structure in a strictly GTP-dependent manner. Interacts directly with several other division proteins. Interacts with SepF.

The protein resides in the cytoplasm. Essential cell division protein that forms a contractile ring structure (Z ring) at the future cell division site. The regulation of the ring assembly controls the timing and the location of cell division. One of the functions of the FtsZ ring is to recruit other cell division proteins to the septum to produce a new cell wall between the dividing cells. Binds GTP and shows GTPase activity. Required for division ring constriction. The protein is Cell division protein FtsZ 2 of Haloferax volcanii (strain ATCC 29605 / DSM 3757 / JCM 8879 / NBRC 14742 / NCIMB 2012 / VKM B-1768 / DS2) (Halobacterium volcanii).